The chain runs to 209 residues: Ribonuclease HII (209 aa).

An RNase H type-2 domain is found at 18–209 (GLVAGVDEVG…FKPVKALLER (192 aa)). A divalent metal cation contacts are provided by Asp24, Glu25, and Asp116.

This sequence belongs to the RNase HII family. Requires Mn(2+) as cofactor. Mg(2+) is required as a cofactor.

Its subcellular location is the cytoplasm. The catalysed reaction is Endonucleolytic cleavage to 5'-phosphomonoester.. In terms of biological role, endonuclease that specifically degrades the RNA of RNA-DNA hybrids. The sequence is that of Ribonuclease HII from Shewanella sp. (strain ANA-3).